The primary structure comprises 73 residues: Translation initiation factor IF-1 (73 aa).

An S1-like domain is found at 1 to 73 (MAKKEGALEL…TRGRIVYRHK (73 aa)).

It belongs to the IF-1 family. Component of the 30S ribosomal translation pre-initiation complex which assembles on the 30S ribosome in the order IF-2 and IF-3, IF-1 and N-formylmethionyl-tRNA(fMet); mRNA recruitment can occur at any time during PIC assembly.

The protein resides in the cytoplasm. In terms of biological role, one of the essential components for the initiation of protein synthesis. Stabilizes the binding of IF-2 and IF-3 on the 30S subunit to which N-formylmethionyl-tRNA(fMet) subsequently binds. Helps modulate mRNA selection, yielding the 30S pre-initiation complex (PIC). Upon addition of the 50S ribosomal subunit IF-1, IF-2 and IF-3 are released leaving the mature 70S translation initiation complex. The protein is Translation initiation factor IF-1 of Cutibacterium acnes (strain DSM 16379 / KPA171202) (Propionibacterium acnes).